A 932-amino-acid polypeptide reads, in one-letter code: Protocadherin gamma-A2 (932 aa).

A signal peptide spans methionine 1 to alanine 28. Cadherin domains lie at glycine 29–phenylalanine 133, glycine 134–phenylalanine 242, threonine 243–phenylalanine 347, tyrosine 348–phenylalanine 452, serine 453–isoleucine 562, and aspartate 570–alanine 682. The Extracellular segment spans residues glycine 29–tyrosine 692. Residues asparagine 419 and asparagine 545 are each glycosylated (N-linked (GlcNAc...) asparagine). Asparagine 685 is a glycosylation site (N-linked (GlcNAc...) asparagine). A helical membrane pass occupies residues leucine 693 to alanine 713. The Cytoplasmic portion of the chain corresponds to histidine 714 to lysine 932. Disordered stretches follow at residues leucine 798–asparagine 841 and alanine 902–lysine 932. Residues phenylalanine 806–asparagine 841 show a composition bias toward polar residues. The span at asparagine 922–lysine 932 shows a compositional bias: basic residues.

Its subcellular location is the cell membrane. Potential calcium-dependent cell-adhesion protein. May be involved in the establishment and maintenance of specific neuronal connections in the brain. This Homo sapiens (Human) protein is Protocadherin gamma-A2 (PCDHGA2).